We begin with the raw amino-acid sequence, 305 residues long: UDP-3-O-acyl-N-acetylglucosamine deacetylase (305 aa).

Zn(2+) contacts are provided by His-79, His-238, and Asp-242. The active-site Proton donor is the His-265.

This sequence belongs to the LpxC family. The cofactor is Zn(2+).

The catalysed reaction is a UDP-3-O-[(3R)-3-hydroxyacyl]-N-acetyl-alpha-D-glucosamine + H2O = a UDP-3-O-[(3R)-3-hydroxyacyl]-alpha-D-glucosamine + acetate. The protein operates within glycolipid biosynthesis; lipid IV(A) biosynthesis; lipid IV(A) from (3R)-3-hydroxytetradecanoyl-[acyl-carrier-protein] and UDP-N-acetyl-alpha-D-glucosamine: step 2/6. Catalyzes the hydrolysis of UDP-3-O-myristoyl-N-acetylglucosamine to form UDP-3-O-myristoylglucosamine and acetate, the committed step in lipid A biosynthesis. This chain is UDP-3-O-acyl-N-acetylglucosamine deacetylase, found in Enterobacter sp. (strain 638).